Here is a 32-residue protein sequence, read N- to C-terminus: Trypsin inhibitor 3 (32 aa).

3 cysteine pairs are disulfide-bonded: C6/C23, C13/C25, and C19/C31.

This sequence belongs to the protease inhibitor I7 (squash-type serine protease inhibitor) family.

The protein localises to the secreted. Its function is as follows. Inhibits trypsin. The chain is Trypsin inhibitor 3 from Cucurbita pepo (Vegetable marrow).